Reading from the N-terminus, the 812-residue chain is Ribonucleoside-diphosphate reductase large subunit (812 aa).

Residues 12–103 (LYVIKRDGRQ…VSNLHKETKK (92 aa)) enclose the ATP-cone domain. ATP is bound by residues 16 to 17 (KR), 22 to 28 (EEVHFDK), Thr-64, and Asp-68. Residues Ser-213 and Ser-228 each coordinate GDP. A disulfide bond links Cys-229 and Cys-455. DTTP contacts are provided by residues 237 to 239 (DSI), Lys-254, Arg-267, and 274 to 275 (CG). Asn-438 contributes to the GDP binding site. Catalysis depends on Asn-438, which acts as the Proton acceptor. Residue Cys-440 is the Cysteine radical intermediate of the active site. GDP is bound by residues Glu-442 and 615–618 (TAST). The active-site Proton acceptor is Glu-442. A Phosphothreonine modification is found at Thr-778. Residue Ser-782 is modified to Phosphoserine. Residue Tyr-786 is modified to Phosphotyrosine.

This sequence belongs to the ribonucleoside diphosphate reductase large chain family. As to quaternary structure, heterodimer of a large and a small subunit.

It catalyses the reaction a 2'-deoxyribonucleoside 5'-diphosphate + [thioredoxin]-disulfide + H2O = a ribonucleoside 5'-diphosphate + [thioredoxin]-dithiol. Its activity is regulated as follows. Under complex allosteric control mediated by deoxynucleoside triphosphates and ATP binding to separate specificity and activation sites on the M1 subunit. The type of nucleotide bound at the specificity site determines substrate preference. It seems probable that ATP makes the enzyme reduce CDP and UDP, dGTP favors ADP reduction and dTTP favors GDP reduction. Stimulated by ATP and inhibited by dATP binding to the activity site. Provides the precursors necessary for DNA synthesis. Catalyzes the biosynthesis of deoxyribonucleotides from the corresponding ribonucleotides. The polypeptide is Ribonucleoside-diphosphate reductase large subunit (RnrL) (Drosophila melanogaster (Fruit fly)).